The following is a 288-amino-acid chain: Bis(5'-nucleosyl)-tetraphosphatase, symmetrical (288 aa).

Belongs to the Ap4A hydrolase family.

It catalyses the reaction P(1),P(4)-bis(5'-adenosyl) tetraphosphate + H2O = 2 ADP + 2 H(+). Its function is as follows. Hydrolyzes diadenosine 5',5'''-P1,P4-tetraphosphate to yield ADP. The chain is Bis(5'-nucleosyl)-tetraphosphatase, symmetrical from Pseudomonas putida (strain GB-1).